The chain runs to 65 residues: Large ribosomal subunit protein bL32 (65 aa).

This sequence belongs to the bacterial ribosomal protein bL32 family.

The sequence is that of Large ribosomal subunit protein bL32 from Tropheryma whipplei (strain TW08/27) (Whipple's bacillus).